A 451-amino-acid polypeptide reads, in one-letter code: Chromosomal replication initiator protein DnaA (451 aa).

Residues 1–77 form a domain I, interacts with DnaA modulators region; the sequence is MTENEQIFWN…EVYNAQISVD (77 aa). The tract at residues 77–110 is domain II; that stretch reads DYVFEEDLMIEQNQTKINQKPKQQALNSLPTVTS. The segment at 111 to 329 is domain III, AAA+ region; the sequence is DLNSKYSFEN…GALKDISLGA (219 aa). ATP-binding residues include Gly155, Gly157, Lys158, and Thr159. The tract at residues 330 to 451 is domain IV, binds dsDNA; it reads NFKQIDTITV…EIETIKNKIK (122 aa).

It belongs to the DnaA family. As to quaternary structure, oligomerizes as a right-handed, spiral filament on DNA at oriC.

Its subcellular location is the cytoplasm. Plays an essential role in the initiation and regulation of chromosomal replication. ATP-DnaA binds to the origin of replication (oriC) to initiate formation of the DNA replication initiation complex once per cell cycle. Binds the DnaA box (a 9 base pair repeat at the origin) and separates the double-stranded (ds)DNA. Forms a right-handed helical filament on oriC DNA; dsDNA binds to the exterior of the filament while single-stranded (ss)DNA is stabiized in the filament's interior. The ATP-DnaA-oriC complex binds and stabilizes one strand of the AT-rich DNA unwinding element (DUE), permitting loading of DNA polymerase. After initiation quickly degrades to an ADP-DnaA complex that is not apt for DNA replication. Binds acidic phospholipids. This Streptococcus pyogenes serotype M49 (strain NZ131) protein is Chromosomal replication initiator protein DnaA.